Consider the following 215-residue polypeptide: Ras-related protein Rab-5A (215 aa).

GTP is bound by residues Ser-29, Ala-30, Gly-32, Lys-33, Ser-34, Ser-35, His-46, Glu-47, Thr-52, and Gly-78. Position 34 (Ser-34) interacts with Mg(2+). 2 consecutive short sequence motifs (switch) follow at residues Gln-44–Ala-56 and Ala-77–Ala-93. Thr-52 contributes to the Mg(2+) binding site. Position 84 is a phosphoserine (Ser-84). GTP is bound by residues Asn-133, Lys-134, Asp-136, Ala-164, and Lys-165. The segment at Leu-181 to Asn-215 is disordered. Residues Cys-212 and Cys-213 are each lipidated (S-geranylgeranyl cysteine).

This sequence belongs to the small GTPase superfamily. Rab family. In terms of assembly, interacts with GDI1; this promotes dissociation from membranes; phosphorylation at Ser-84 disrupts this interaction. Interacts with GDI2; phosphorylation at Ser-84 disrupts the interaction. Interacts with EEA1. Interacts with RIN1 and GAPVD1, which regulate its pathway, probably by acting as a GEF. Interacts with ALS2CL, SUN2, ZFYVE20 and RUFY1. Interacts with RABEP1; one RABEP1 homodimer binds two RAB5A chains, but at opposite sides of the dimer. Interacts with SGSM1, SGSM3 and PIK3CB. Interacts with RINL. May be a component of a complex composed of RAB5A, DYN2 and PIK3C3. Does not interact with the BLOC-3 complex (heterodimer of HPS1 and HPS4). Interacts with CLN5. Interacts with APPL2. Interacts with F8A1/F8A2/F8A3. Found in a complex with F8A1/F8A2/F8A3, HTT and RAB5A; mediates the recruitment of HTT by RAB5A onto early endosomes. Interacts with ATP9A. Interacts with PPP1R21; mediates the recruitment of FERRY complex by RAB5A onto early endosomes. Mg(2+) is required as a cofactor. In terms of processing, phosphorylation of Ser-84 in the switch II region by LRRK2 prevents the association of RAB regulatory proteins, including RAB GDP dissociation inhibitors GDI1 and GDI2.

It is found in the cell membrane. Its subcellular location is the early endosome membrane. It localises to the melanosome. The protein localises to the cytoplasmic vesicle. The protein resides in the cell projection. It is found in the ruffle. Its subcellular location is the membrane. It localises to the cytoplasm. The protein localises to the cytosol. The protein resides in the phagosome membrane. It is found in the endosome membrane. The catalysed reaction is GTP + H2O = GDP + phosphate + H(+). With respect to regulation, regulated by guanine nucleotide exchange factors (GEFs) including RINL, which promote the exchange of bound GDP for free GTP. Regulated by GTPase activating proteins (GAPs) which increase the GTP hydrolysis activity. Inhibited by GDP dissociation inhibitors (GDIs). The small GTPases Rab are key regulators of intracellular membrane trafficking, from the formation of transport vesicles to their fusion with membranes. Rabs cycle between an inactive GDP-bound form and an active GTP-bound form that is able to recruit to membranes different sets of downstream effectors directly responsible for vesicle formation, movement, tethering and fusion. RAB5A is required for the fusion of plasma membranes and early endosomes. Contributes to the regulation of filopodia extension. Required for the exosomal release of SDCBP, CD63, PDCD6IP and syndecan. Regulates maturation of apoptotic cell-containing phagosomes, probably downstream of DYN2 and PIK3C3. The polypeptide is Ras-related protein Rab-5A (Rattus norvegicus (Rat)).